A 548-amino-acid chain; its full sequence is Membrane protein insertase YidC (548 aa).

The next 5 membrane-spanning stretches (helical) occupy residues 6 to 26 (NLIL…WESD), 357 to 377 (NWGV…FPLT), 424 to 444 (LGGC…YWAL), 455 to 475 (FALW…PILM), and 503 to 523 (PIIF…YWLV).

Belongs to the OXA1/ALB3/YidC family. Type 1 subfamily. As to quaternary structure, interacts with the Sec translocase complex via SecD. Specifically interacts with transmembrane segments of nascent integral membrane proteins during membrane integration.

The protein resides in the cell inner membrane. Functionally, required for the insertion and/or proper folding and/or complex formation of integral membrane proteins into the membrane. Involved in integration of membrane proteins that insert both dependently and independently of the Sec translocase complex, as well as at least some lipoproteins. Aids folding of multispanning membrane proteins. In Aeromonas hydrophila subsp. hydrophila (strain ATCC 7966 / DSM 30187 / BCRC 13018 / CCUG 14551 / JCM 1027 / KCTC 2358 / NCIMB 9240 / NCTC 8049), this protein is Membrane protein insertase YidC.